The following is a 98-amino-acid chain: Small ribosomal subunit protein uS17 (98 aa).

The protein belongs to the universal ribosomal protein uS17 family. As to quaternary structure, part of the 30S ribosomal subunit.

One of the primary rRNA binding proteins, it binds specifically to the 5'-end of 16S ribosomal RNA. The polypeptide is Small ribosomal subunit protein uS17 (Leptothrix cholodnii (strain ATCC 51168 / LMG 8142 / SP-6) (Leptothrix discophora (strain SP-6))).